Reading from the N-terminus, the 157-residue chain is Tuberoinfundibular peptide of 39 residues (157 aa).

An N-terminal signal peptide occupies residues 1–25; that stretch reads MALSLPPRPALLFLVLMSVTLMASA. A propeptide spanning residues 26–116 is cleaved from the precursor; sequence FPQPQLRPLQ…DWPSRVGHQQ (91 aa).

This sequence belongs to the parathyroid hormone family.

The protein localises to the secreted. Functionally, plays a role as a potent and selective agonist of pth2r resulting in adenyl cyclase activation and intracellular calcium level elevation. The chain is Tuberoinfundibular peptide of 39 residues from Danio rerio (Zebrafish).